The primary structure comprises 791 residues: Nuclear cap-binding protein subunit 1-A (791 aa).

The tract at residues M1–P24 is disordered. Residues E28–K240 enclose the MIF4G domain. Residues L641–I714 are a coiled coil. Positions Q664–G687 are disordered.

Belongs to the NCBP1 family. In terms of assembly, component of the nuclear cap-binding complex (CBC), a heterodimer composed of ncbp1/cbp80 and ncbp2/cbp20 that interacts with m7GpppG-capped RNA. Component of an alternative nuclear cap-binding complex (CBC) composed of ncbp1/cbp80 and ncbp3.

It localises to the nucleus. Its subcellular location is the cytoplasm. Functionally, component of the cap-binding complex (CBC), which binds cotranscriptionally to the 5'-cap of pre-mRNAs and is involved in various processes such as pre-mRNA splicing, translation regulation, nonsense-mediated mRNA decay, RNA-mediated gene silencing (RNAi) by microRNAs (miRNAs) and mRNA export. The CBC complex is involved in mRNA export from the nucleus, leading to the recruitment of the mRNA export machinery to the 5'-end of mRNA and to mRNA export in a 5' to 3' direction through the nuclear pore. The CBC complex is also involved in mediating U snRNA and intronless mRNAs export from the nucleus. The CBC complex is essential for a pioneer round of mRNA translation, before steady state translation when the CBC complex is replaced by cytoplasmic cap-binding protein eIF4E. The pioneer round of mRNA translation mediated by the CBC complex plays a central role in nonsense-mediated mRNA decay (NMD), NMD only taking place in mRNAs bound to the CBC complex, but not on eIF4E-bound mRNAs. The CBC complex enhances NMD in mRNAs containing at least one exon-junction complex (EJC), promoting the interaction between UPF1 and UPF2. The CBC complex is also involved in 'failsafe' NMD, which is independent of the EJC complex, while it does not participate in Staufen-mediated mRNA decay (SMD). During cell proliferation, the CBC complex is also involved in microRNAs (miRNAs) biogenesis via its interaction with SRRT/ARS2 and is required for miRNA-mediated RNA interference. The CBC complex also acts as a negative regulator of parn, thereby acting as an inhibitor of mRNA deadenylation. In the CBC complex, NCBP1/CBP80 does not bind directly capped RNAs (m7GpppG-capped RNA) but is required to stabilize the movement of the N-terminal loop of NCBP2/CBP20 and lock the CBC into a high affinity cap-binding state with the cap structure. Associates with NCBP3 to form an alternative cap-binding complex (CBC) which plays a key role in mRNA export. The conventional CBC with NCBP2 binds both small nuclear RNA (snRNA) and messenger (mRNA) and is involved in their export from the nucleus whereas the alternative CBC with NCBP3 does not bind snRNA and associates only with mRNA thereby playing a role only in mRNA export. The sequence is that of Nuclear cap-binding protein subunit 1-A (ncbp1-a) from Xenopus laevis (African clawed frog).